Reading from the N-terminus, the 40-residue chain is Subtilisin-like serine protease AS-E1 (40 aa).

In terms of domain architecture, Peptidase S8 spans Pro-4–Tyr-40. Asp-36 (charge relay system) is an active-site residue.

This sequence belongs to the peptidase S8 family. As to quaternary structure, homodimer.

Its activity is regulated as follows. Strongly inhibited by antipain and PMSF. Inhibited by benzamidine and aprotinin by 80% and 17% respectively. Little or no inhibition by EDTA, E-64, iodoacetic acid, leupeptin and FUT-175. Its function is as follows. Subtilisin-like serine protease. Cleaves prothrombin at 155-Arg-|-Ser-156, 45-Thr-|-Ala-46 and 316-Tyr-|-Ile-317 to produce meizothrombin(desF1)-like molecules. Degrades fibrinogen. Inhibits plasma coagulation. This chain is Subtilisin-like serine protease AS-E1, found in Acremonium sp.